We begin with the raw amino-acid sequence, 186 residues long: MAVRLLRVASAALGDTAVRWQPLVGPRAGNRGPGGSIWLGLGGRAAAARTLSLSARAWSSSEDKITVHFINRDGKTLTTQGKVGDSLLDVVIENNLDIDGFGACEGTLACSTCHLIFEDHIFEKLEAITDEENDMLDLAYGLTDRSRLGCQICLTKAMDNMTVRVPEAVADARESIDLGKNSSKLE.

The transit peptide at 1–58 directs the protein to the mitochondrion; sequence MAVRLLRVASAALGDTAVRWQPLVGPRAGNRGPGGSIWLGLGGRAAAARTLSLSARAW. At Ser61 the chain carries Phosphoserine. Lys64 carries the post-translational modification N6-acetyllysine; alternate. Residue Lys64 is modified to N6-succinyllysine; alternate. Positions 65-169 constitute a 2Fe-2S ferredoxin-type domain; that stretch reads ITVHFINRDG…NMTVRVPEAV (105 aa). 4 residues coordinate [2Fe-2S] cluster: Cys104, Cys110, Cys113, and Cys150. Lys156 bears the N6-succinyllysine mark. Ser175 is modified (phosphoserine).

The protein belongs to the adrenodoxin/putidaredoxin family. As to quaternary structure, interacts with CYP11A1. It depends on [2Fe-2S] cluster as a cofactor.

Its subcellular location is the mitochondrion matrix. In terms of biological role, essential for the synthesis of various steroid hormones. Participates in the reduction of mitochondrial cytochrome P450 for steroidogenesis. Transfers electrons from adrenodoxin reductase to CYP11A1, a cytochrome P450 that catalyzes cholesterol side-chain cleavage. Does not form a ternary complex with adrenodoxin reductase and CYP11A1 but shuttles between the two enzymes to transfer electrons. In Sus scrofa (Pig), this protein is Adrenodoxin, mitochondrial (FDX1).